The chain runs to 562 residues: T-complex protein 1 subunit epsilon (562 aa).

It belongs to the TCP-1 chaperonin family. Heterooligomeric complex of about 850 to 900 kDa that forms two stacked rings, 12 to 16 nm in diameter.

Its subcellular location is the cytoplasm. Functionally, molecular chaperone; assists the folding of proteins upon ATP hydrolysis. Known to play a role, in vitro, in the folding of actin and tubulin. In yeast may play a role in mitotic spindle formation. The polypeptide is T-complex protein 1 subunit epsilon (CCT5) (Saccharomyces cerevisiae (strain ATCC 204508 / S288c) (Baker's yeast)).